The sequence spans 63 residues: Cecropin-A1 (63 aa).

The first 19 residues, 1-19 (MNFYNIFVFVALILAITIG), serve as a signal peptide directing secretion. An Arginine amide modification is found at R62.

It belongs to the cecropin family.

The protein localises to the secreted. In terms of biological role, cecropins have lytic and antibacterial activity against several Gram-positive and Gram-negative bacteria. In Drosophila simulans (Fruit fly), this protein is Cecropin-A1 (CecA1).